The sequence spans 482 residues: Altronate oxidoreductase (482 aa).

Position 18–29 (18–29 (IIQFGEGNFLRA)) interacts with NAD(+).

The protein belongs to the mannitol dehydrogenase family. UxaB subfamily.

It catalyses the reaction D-altronate + NAD(+) = keto-D-tagaturonate + NADH + H(+). Its pathway is carbohydrate metabolism; pentose and glucuronate interconversion. This Shigella sonnei (strain Ss046) protein is Altronate oxidoreductase.